The following is a 396-amino-acid chain: DnaJ homolog subfamily A member 1 (396 aa).

Residues 6–68 (TYYDVLGVKP…KKRELYDKGG (63 aa)) enclose the J domain. Lys66 is subject to N6-acetyllysine. Residue Ser83 is modified to Phosphoserine. The CR-type zinc-finger motif lies at 120-204 (GATRKLALQK…CNGRKIVREK (85 aa)). 8 residues coordinate Zn(2+): Cys133, Cys136, Cys149, Cys152, Cys176, Cys179, Cys192, and Cys195. CXXCXGXG motif repeat units follow at residues 133–140 (CDKCEGRG), 149–156 (CPNCRGTG), 176–183 (CMECQGHG), and 192–199 (CKSCNGRK). Ser334 bears the Phosphoserine mark. The tract at residues 351-396 (VEETDEMDQVELVDFDPNQERRRHYNGEAYEDDEHHPRGGVQCQTS) is disordered. The span at 352 to 364 (EETDEMDQVELVD) shows a compositional bias: acidic residues. Phosphotyrosine is present on Tyr380. Residue Cys393 is modified to Cysteine methyl ester. The S-farnesyl cysteine moiety is linked to residue Cys393. Residues 394-396 (QTS) constitute a propeptide, removed in mature form.

Identified in a complex with HSPA1B and BAX. Interacts with RNF207.

Its subcellular location is the membrane. It localises to the cytoplasm. The protein resides in the microsome. The protein localises to the mitochondrion. It is found in the nucleus. Its subcellular location is the perinuclear region. Co-chaperone for HSPA8/Hsc70. Plays a role in protein transport into mitochondria via its role as co-chaperone. Functions as co-chaperone for HSPA1B and negatively regulates the translocation of BAX from the cytosol to mitochondria in response to cellular stress, thereby protecting cells against apoptosis. Stimulates ATP hydrolysis, but not the folding of unfolded proteins mediated by HSPA1A (in vitro). Promotes apoptosis in response to cellular stress mediated by exposure to anisomycin or UV. The polypeptide is DnaJ homolog subfamily A member 1 (DNAJA1) (Pongo abelii (Sumatran orangutan)).